Consider the following 337-residue polypeptide: Fructose-1,6-bisphosphatase class 1 (337 aa).

Mg(2+) contacts are provided by E89, D112, L114, and D115. Residues 115-118, N208, Y241, and K271 each bind substrate; that span reads DGSS. E277 is a Mg(2+) binding site.

The protein belongs to the FBPase class 1 family. As to quaternary structure, homotetramer. The cofactor is Mg(2+).

It localises to the cytoplasm. It catalyses the reaction beta-D-fructose 1,6-bisphosphate + H2O = beta-D-fructose 6-phosphate + phosphate. The protein operates within carbohydrate biosynthesis; gluconeogenesis. The sequence is that of Fructose-1,6-bisphosphatase class 1 from Yersinia enterocolitica serotype O:8 / biotype 1B (strain NCTC 13174 / 8081).